Here is a 354-residue protein sequence, read N- to C-terminus: Selenide, water dikinase (354 aa).

Residue cysteine 23 is part of the active site. ATP is bound by residues lysine 26 and 54-56 (TSD). Aspartate 57 contacts Mg(2+). ATP contacts are provided by residues aspartate 74, aspartate 97, and 145–147 (GHS). Aspartate 97 contacts Mg(2+). Aspartate 233 lines the Mg(2+) pocket.

Belongs to the selenophosphate synthase 1 family. Class I subfamily. As to quaternary structure, homodimer. The cofactor is Mg(2+).

It catalyses the reaction hydrogenselenide + ATP + H2O = selenophosphate + AMP + phosphate + 2 H(+). In terms of biological role, synthesizes selenophosphate from selenide and ATP. This chain is Selenide, water dikinase, found in Burkholderia orbicola (strain MC0-3).